The primary structure comprises 512 residues: Probable cobyric acid synthase (512 aa).

Residues 275–460 (SVTVAVPHLP…LHGLFGNDAA (186 aa)) enclose the GATase cobBQ-type domain. Cysteine 353 serves as the catalytic Nucleophile. Histidine 452 is an active-site residue.

This sequence belongs to the CobB/CobQ family. CobQ subfamily.

The protein operates within cofactor biosynthesis; adenosylcobalamin biosynthesis. Functionally, catalyzes amidations at positions B, D, E, and G on adenosylcobyrinic A,C-diamide. NH(2) groups are provided by glutamine, and one molecule of ATP is hydrogenolyzed for each amidation. This is Probable cobyric acid synthase from Halobacterium salinarum (strain ATCC 29341 / DSM 671 / R1).